The sequence spans 364 residues: Probable UDP-arabinopyranose mutase 4 (364 aa).

The DXD motif signature appears at 106–108; that stretch reads DDD. An N-linked (Glc...) arginine glycan is attached at R154.

This sequence belongs to the RGP family. As to quaternary structure, heteromers with RGP1 and RGP2. Mn(2+) is required as a cofactor. Mg(2+) serves as cofactor. Post-translationally, reversibly glycosylated in vitro by UDP-glucose, UDP-xylose and UDP-galactose, but not UDP-mannose. Specifically expressed in developing seeds.

Its subcellular location is the cytoplasm. It localises to the cytosol. The protein localises to the golgi apparatus. It catalyses the reaction UDP-beta-L-arabinofuranose = UDP-beta-L-arabinopyranose. Its function is as follows. Probable UDP-L-arabinose mutase involved in the biosynthesis of cell wall non-cellulosic polysaccharides. The sequence is that of Probable UDP-arabinopyranose mutase 4 from Arabidopsis thaliana (Mouse-ear cress).